The primary structure comprises 360 residues: MTATPEVQKSIEEVYTKLQGASDCSSLLKKHLTKDVVAKNKSKKTRLGATLLDVIQSGGENLDSGVGIYAPDAESYTLFADLFNPVIEEYHNGFKATDTQPAMDLGEKNVGELADLDPEGKFIVSTRIRCGRSLQGYPFNPCLSETNYKMMETRMKEIFNSITDPELKGTYYPLTGMDEETKKKLIADHFLFKEGDRFLKAANANRYWPNGRGIFHNEKKTFLVWVNEEDHLRIISMQNGGNVGEVLARLIKGLNLVAAKAPFARHPRLGWLTFCPTNLGTTVRASVHIKLPKISAKDDFKKICSDMKLQIRGIHGEHSESKEGIYDISNKQRLGLTEYQAVRQMYDGLKKLIELEKAAA.

Residues 10–92 (SIEEVYTKLQ…FNPVIEEYHN (83 aa)) enclose the Phosphagen kinase N-terminal domain. 65–69 (GVGIY) is a substrate binding site. Positions 122-359 (FIVSTRIRCG…KKLIELEKAA (238 aa)) constitute a Phosphagen kinase C-terminal domain. ATP is bound by residues 125-129 (STRIR) and His189. Glu229 provides a ligand contact to substrate. Arg233 contributes to the ATP binding site. Residue Cys275 participates in substrate binding. ATP contacts are provided by residues 284 to 288 (RASVH), 312 to 317 (RGIHGE), and Asp327. Residue Glu317 participates in substrate binding.

It belongs to the ATP:guanido phosphotransferase family.

It catalyses the reaction L-arginine + ATP = N(omega)-phospho-L-arginine + ADP + H(+). This Caenorhabditis elegans protein is Probable arginine kinase ZC434.8.